The following is a 145-amino-acid chain: MLTAEEKAAVTAFWGKVKVDEVGGEALGRLLVVYPWTQRFFESFGDLSTADAVMNNPKVKAHGKKVLDSFSNGMKHLDDLKGTFAALSELHCDKLHVDPENFKLLGNVLVVVLARNFGKEFTPVLQADFQKVVAGVANALAHRYH.

The 145-residue stretch at 1 to 145 (MLTAEEKAAV…VANALAHRYH (145 aa)) folds into the Globin domain. Threonine 11 is modified (phosphothreonine). At serine 43 the chain carries Phosphoserine. Lysine 58 carries the post-translational modification N6-acetyllysine. Histidine 62 contacts heme b. Lysine 81 carries the N6-acetyllysine modification. Histidine 91 lines the heme b pocket. Cysteine 92 is subject to S-nitrosocysteine.

This sequence belongs to the globin family. In terms of assembly, heterotetramer of two alpha chains and two beta chains. As to expression, red blood cells.

In terms of biological role, involved in oxygen transport from the lung to the various peripheral tissues. Functions as an endogenous inhibitor of enkephalin-degrading enzymes such as DPP3, and may thereby play a role as a regulator of pain and inflammation. The protein is Hemoglobin subunit beta (HBB) of Bos taurus (Bovine).